The primary structure comprises 366 residues: UDP-N-acetylenolpyruvoylglucosamine reductase (366 aa).

Residues Val-29–Ser-203 form the FAD-binding PCMH-type domain. The active site involves Arg-177. Ser-258 functions as the Proton donor in the catalytic mechanism. The active site involves Glu-358.

The protein belongs to the MurB family. The cofactor is FAD.

The protein resides in the cytoplasm. It catalyses the reaction UDP-N-acetyl-alpha-D-muramate + NADP(+) = UDP-N-acetyl-3-O-(1-carboxyvinyl)-alpha-D-glucosamine + NADPH + H(+). The protein operates within cell wall biogenesis; peptidoglycan biosynthesis. In terms of biological role, cell wall formation. The chain is UDP-N-acetylenolpyruvoylglucosamine reductase from Mycobacterium ulcerans (strain Agy99).